A 200-amino-acid polypeptide reads, in one-letter code: Large ribosomal subunit protein uL4 (200 aa).

The segment at 38–80 (GRQGSKQQKTRSDVSGGGKRPWRQKGTGRARAGTTRGPIWRGG) is disordered.

It belongs to the universal ribosomal protein uL4 family. Part of the 50S ribosomal subunit.

One of the primary rRNA binding proteins, this protein initially binds near the 5'-end of the 23S rRNA. It is important during the early stages of 50S assembly. It makes multiple contacts with different domains of the 23S rRNA in the assembled 50S subunit and ribosome. Its function is as follows. Forms part of the polypeptide exit tunnel. This is Large ribosomal subunit protein uL4 from Stutzerimonas stutzeri (strain A1501) (Pseudomonas stutzeri).